Consider the following 188-residue polypeptide: Capsid protein (188 aa).

Basic residues predominate over residues arginine 150–serine 181. The interval arginine 150–cysteine 188 is disordered. Phosphoserine; by host is present on residues serine 160, serine 167, and serine 175. One copy of the 1; half-length repeat lies at serine 160–proline 166. Residues serine 160–glutamine 182 are 3 X 8 AA repeats of S-P-R-R-R-[PR]-S-Q. Positions arginine 163 to arginine 180 match the Bipartite nuclear localization signal motif. Repeat copies occupy residues serine 167–glutamine 174 and serine 175–glutamine 182. The RNA binding stretch occupies residues glutamine 182–cysteine 188.

It belongs to the orthohepadnavirus core antigen family. Homodimerizes, then multimerizes. Interacts with cytosol exposed regions of viral L glycoprotein present in the reticulum-to-Golgi compartment. Interacts with human FLNB. Phosphorylated form interacts with host importin alpha; this interaction depends on the exposure of the NLS, which itself depends upon genome maturation and/or phosphorylation of the capsid protein. Interacts with host NUP153. In terms of processing, phosphorylated by host SRPK1, SRPK2, and maybe protein kinase C or GAPDH. Phosphorylation is critical for pregenomic RNA packaging. Protein kinase C phosphorylation is stimulated by HBx protein and may play a role in transport of the viral genome to the nucleus at the late step during the viral replication cycle.

Its subcellular location is the virion. The protein localises to the host cytoplasm. Its function is as follows. Self assembles to form an icosahedral capsid. Most capsids appear to be large particles with an icosahedral symmetry of T=4 and consist of 240 copies of capsid protein, though a fraction forms smaller T=3 particles consisting of 180 capsid proteins. Entering capsids are transported along microtubules to the nucleus. Phosphorylation of the capsid is thought to induce exposure of nuclear localization signal in the C-terminal portion of the capsid protein that allows binding to the nuclear pore complex via the importin (karyopherin-) alpha and beta. Capsids are imported in intact form through the nuclear pore into the nuclear basket, where it probably binds NUP153. Only capsids that contain the mature viral genome can release the viral DNA and capsid protein into the nucleoplasm. Immature capsids get stuck in the basket. Capsids encapsulate the pre-genomic RNA and the P protein. Pre-genomic RNA is reverse-transcribed into DNA while the capsid is still in the cytoplasm. The capsid can then either be directed to the nucleus, providing more genomes for transcription, or bud through the endoplasmic reticulum to provide new virions. This chain is Capsid protein, found in Marmota monax (Woodchuck).